The following is a 539-amino-acid chain: Efflux pump roqT (539 aa).

The disordered stretch occupies residues 1-25 (MEKEVATDPLPQEIPSDAPDEGGSL). 12 helical membrane passes run 36–56 (VSLTIALCLGVFCMSLDVTII), 108–128 (LFLFEVGSLVCGVTPTSVGLI), 133–153 (IAGLGAGGLFSGSLLIIAQTV), 160–180 (VFTALLGSMYGIASVAGPPLG), 191–211 (WCFYINLPIGAVTAAFVLFFF), 233–253 (IGSFFFLPAIVCLLLALQWGG), 262–282 (RIIVLFVLTGVLLLAFVAVQI), 305–325 (WFAITLNGAYFVFIYYLPIWF), 338–360 (VMNLPSIIAVVVVSIISGMLVTI), 362–384 (GYYNPVMIMSSVTLSIGAGLLST), 395–415 (IGYQILMGLGVGLGMQQPFMV), and 502–522 (AFYVGVALASLSCIGTIALEW).

It belongs to the major facilitator superfamily. TCR/Tet family.

It localises to the membrane. Efflux pump; part of the gene cluster that mediates the biosynthesis of the mycotoxins roquefortine C and meleagrin. This Penicillium rubens (strain ATCC 28089 / DSM 1075 / NRRL 1951 / Wisconsin 54-1255) (Penicillium chrysogenum) protein is Efflux pump roqT.